The primary structure comprises 560 residues: Light-independent protochlorophyllide reductase subunit N (560 aa).

[4Fe-4S] cluster-binding residues include Cys24, Cys49, and Cys109. Residues 173-182 (NSLFNQSSNS) show a composition bias toward low complexity. A disordered region spans residues 173–210 (NSLFNQSSNSPENLKTLNTKKDTFQNSTENSKTFSAEK). Residues 196–206 (FQNSTENSKTF) are compositionally biased toward polar residues.

Belongs to the BchN/ChlN family. Protochlorophyllide reductase is composed of three subunits; ChlL, ChlN and ChlB. Forms a heterotetramer of two ChlB and two ChlN subunits. The cofactor is [4Fe-4S] cluster.

It is found in the plastid. It localises to the chloroplast. The catalysed reaction is chlorophyllide a + oxidized 2[4Fe-4S]-[ferredoxin] + 2 ADP + 2 phosphate = protochlorophyllide a + reduced 2[4Fe-4S]-[ferredoxin] + 2 ATP + 2 H2O. The protein operates within porphyrin-containing compound metabolism; chlorophyll biosynthesis (light-independent). Component of the dark-operative protochlorophyllide reductase (DPOR) that uses Mg-ATP and reduced ferredoxin to reduce ring D of protochlorophyllide (Pchlide) to form chlorophyllide a (Chlide). This reaction is light-independent. The NB-protein (ChlN-ChlB) is the catalytic component of the complex. This chain is Light-independent protochlorophyllide reductase subunit N, found in Tetradesmus obliquus (Green alga).